Reading from the N-terminus, the 142-residue chain is MGLTTAQIKAIQDHWFLNIKGCLQAAADSIFFKYLTAYPGDLAFFHKFSSVPLYGLRSNPAYKAQTLTVINYLDKVVDALGGNAGALMKAKVPSHDAMGITPKHFGQLLKLVGGVFQEEFSADPTTVAAWGDAAGVLVAAMK.

One can recognise a Globin domain in the interval 2–142 (GLTTAQIKAI…AAGVLVAAMK (141 aa)). Position 95 (His-95) interacts with heme b.

Belongs to the globin family. As to quaternary structure, homotetramer.

Hemoglobin F-I appears to function in storage, rather than transport of oxygen. The chain is Hemoglobin F-I from Urechis caupo (Innkeeper worm).